Here is a 311-residue protein sequence, read N- to C-terminus: Aspartate carbamoyltransferase catalytic subunit (311 aa).

Carbamoyl phosphate contacts are provided by arginine 55 and threonine 56. An L-aspartate-binding site is contributed by lysine 83. Arginine 105, histidine 134, and glutamine 137 together coordinate carbamoyl phosphate. Residues arginine 167 and arginine 226 each coordinate L-aspartate. Glycine 267 and proline 268 together coordinate carbamoyl phosphate.

The protein belongs to the aspartate/ornithine carbamoyltransferase superfamily. ATCase family. As to quaternary structure, heterododecamer (2C3:3R2) of six catalytic PyrB chains organized as two trimers (C3), and six regulatory PyrI chains organized as three dimers (R2).

The enzyme catalyses carbamoyl phosphate + L-aspartate = N-carbamoyl-L-aspartate + phosphate + H(+). It functions in the pathway pyrimidine metabolism; UMP biosynthesis via de novo pathway; (S)-dihydroorotate from bicarbonate: step 2/3. Functionally, catalyzes the condensation of carbamoyl phosphate and aspartate to form carbamoyl aspartate and inorganic phosphate, the committed step in the de novo pyrimidine nucleotide biosynthesis pathway. The polypeptide is Aspartate carbamoyltransferase catalytic subunit (Corynebacterium jeikeium (strain K411)).